We begin with the raw amino-acid sequence, 717 residues long: Polyribonucleotide nucleotidyltransferase (717 aa).

Residues aspartate 496 and aspartate 502 each coordinate Mg(2+). Positions 563 to 622 (PRLLTIKIDPDLIGLVIGPGGKTVKGITEQTGTKIDIDDDGTVTISSTDGEQAEKAKRLI) constitute a KH domain. Residues 632-700 (GEVYLGRVTR…SKGRLNLTRL (69 aa)) form the S1 motif domain.

Belongs to the polyribonucleotide nucleotidyltransferase family. It depends on Mg(2+) as a cofactor.

It localises to the cytoplasm. It carries out the reaction RNA(n+1) + phosphate = RNA(n) + a ribonucleoside 5'-diphosphate. Involved in mRNA degradation. Catalyzes the phosphorolysis of single-stranded polyribonucleotides processively in the 3'- to 5'-direction. The polypeptide is Polyribonucleotide nucleotidyltransferase (Microcystis aeruginosa (strain NIES-843 / IAM M-2473)).